The chain runs to 394 residues: MVKKVALAYSGGLDTSVCIPILKEKYGYDEVITISVDVGQPEEEIKKADAKAEKISNKHYTIDAKEEFVKDYIFPLIKANGDYEGYVMGTSVARPLIAKKVVEAAIKEGAVALAHGCTGKGNDQLRFEAVFRQTDMDVIAPMREMNLTREWEIDYAKEHGIPVEVTKAKPWSVDENIWSRSIEGGKLEDPSFVPPEEIFEWTKSAEDAPNEPRIVDIDFEAGVPVALDGEKLGGYALVRKLNEIAGENGVGRTDMIEDRVLGLKARENYEHPAATVLLAAHADLEKLVLTRGELKFKKIVDEQWSELAYYGLVDEPLYADLNAFIDKSQERVTGTVKVKLYKGALTILARSSPNALYSEDLVSFDSQTIDQKDAEGFAKYHGFQARMYRKVMEK.

8 to 16 contacts ATP; that stretch reads AYSGGLDTS. Residues Tyr-86 and Ser-91 each coordinate L-citrulline. Gly-116 contacts ATP. The L-aspartate site is built by Thr-118, Asn-122, and Asp-123. Asn-122 is a binding site for L-citrulline. Positions 126, 172, 181, 257, and 269 each coordinate L-citrulline.

The protein belongs to the argininosuccinate synthase family. Type 1 subfamily. As to quaternary structure, homotetramer.

Its subcellular location is the cytoplasm. It catalyses the reaction L-citrulline + L-aspartate + ATP = 2-(N(omega)-L-arginino)succinate + AMP + diphosphate + H(+). Its pathway is amino-acid biosynthesis; L-arginine biosynthesis; L-arginine from L-ornithine and carbamoyl phosphate: step 2/3. The polypeptide is Argininosuccinate synthase (Methanosarcina acetivorans (strain ATCC 35395 / DSM 2834 / JCM 12185 / C2A)).